The sequence spans 149 residues: UPF0260 protein PSPTO_3918 (149 aa).

This sequence belongs to the UPF0260 family.

The chain is UPF0260 protein PSPTO_3918 from Pseudomonas syringae pv. tomato (strain ATCC BAA-871 / DC3000).